The chain runs to 423 residues: Polyglutamylase complex subunit TTLL1 (423 aa).

The TTL domain occupies 1–367 (MAGRVKWVTD…NGEIPDCKWN (367 aa)). ATP is bound by residues Lys-138, 144-145 (QG), 181-184 (SVYI), and 194-196 (KFD). Position 144 (Gln-144) interacts with a protein. Arg-220 is an L-glutamate binding site. 241 to 242 (TN) is an ATP binding site. Lys-259 serves as a coordination point for L-glutamate. Mg(2+) is bound by residues Asp-313, Glu-326, and Asn-328. Position 344 (Lys-344) interacts with L-glutamate. A disordered region spans residues 390–423 (DGAERELRNRPGQPVGPRAGRSRDSGRSVLTTWK).

Belongs to the tubulin polyglutamylase family. Part of the neuronal tubulin polyglutamylase complex which contains TPGS1, TPGS2, TTLL1, LRRC49 and NICN1. Interacts with PCM1, CSTPP1 and LRRC49. The cofactor is Mg(2+). As to expression, highly expressed in brain, heart and kidney. Expressed in liver, lung, muscle, spleen, testis and trachea. In the brain, expressed in ependymal cilia, cortex, corpus callosum and striatum. Expressed in blastomere.

Its subcellular location is the cytoplasm. It is found in the cytoskeleton. The protein localises to the cilium basal body. The protein resides in the cilium axoneme. It localises to the cell projection. Its subcellular location is the cilium. It is found in the flagellum. It catalyses the reaction (L-glutamyl)(n)-gamma-L-glutamyl-L-glutamyl-[protein] + L-glutamate + ATP = (L-glutamyl)(n+1)-gamma-L-glutamyl-L-glutamyl-[protein] + ADP + phosphate + H(+). Catalytic subunit of a polyglutamylase complex which modifies tubulin, generating side chains of glutamate on the gamma-carboxyl group of specific glutamate residues within the C-terminal tail of tubulin. Probably involved in the side-chain elongation step of the polyglutamylation reaction rather than the initiation step. Modifies both alpha- and beta-tubulins with a preference for the alpha-tail. Unlike most polyglutamylases of the tubulin--tyrosine ligase family, only displays a catalytic activity when in complex with other proteins as it is most likely lacking domains important for autonomous activity. Part of the neuronal tubulin polyglutamylase complex. Mediates cilia and flagella polyglutamylation which is essential for their biogenesis and motility. Involved in respiratory motile cilia function through the regulation of beating asymmetry. Essential for sperm flagella biogenesis, motility and male fertility. Also mediates glutamylation of non-tubulin proteins. Involved in KLF4 glutamylation which impedes its ubiquitination, thereby leading to somatic cell reprogramming, pluripotency maintenance and embryogenesis. The chain is Polyglutamylase complex subunit TTLL1 from Mus musculus (Mouse).